A 360-amino-acid polypeptide reads, in one-letter code: Heat-inducible transcription repressor HrcA (360 aa).

Belongs to the HrcA family.

Negative regulator of class I heat shock genes (grpE-dnaK-dnaJ and groELS operons). Prevents heat-shock induction of these operons. The sequence is that of Heat-inducible transcription repressor HrcA from Gloeobacter violaceus (strain ATCC 29082 / PCC 7421).